Consider the following 108-residue polypeptide: Large ribosomal subunit protein P1 (108 aa).

The segment at 67-108 is disordered; sequence PAAAPAEAGGEEKKEEEKKEEEEKEEEVSEEEALAGLSALFG. The span at 84 to 99 shows a compositional bias: acidic residues; the sequence is KKEEEEKEEEVSEEEA.

This sequence belongs to the eukaryotic ribosomal protein P1/P2 family. As to quaternary structure, part of the 50S ribosomal subunit. Homodimer, it forms part of the ribosomal stalk which helps the ribosome interact with GTP-bound translation factors. Forms a heptameric uL10/P0(P1)2(P1)2(P1)2 complex, where uL10/P0 forms an elongated spine to which the P1 dimers bind in a sequential fashion.

In terms of biological role, forms part of the ribosomal stalk, playing a central role in the interaction of the ribosome with GTP-bound translation factors. The stalk complex of P.horikoshii binds to E.coli large subunits and confers on them the ability to interact with eukaryotic elongation factors. Each succesive P1 dimer bound along the P0 spine increases the GTPase activity of elongation factors and increases translation by reconsituted ribosomes. The chain is Large ribosomal subunit protein P1 from Pyrococcus horikoshii (strain ATCC 700860 / DSM 12428 / JCM 9974 / NBRC 100139 / OT-3).